Consider the following 1371-residue polypeptide: Perilipin-4 (1371 aa).

A compositionally biased stretch (basic and acidic residues) spans 1–13 (MSAPDEGRRDPPK). Residues 1-22 (MSAPDEGRRDPPKPKGKTLGSF) are disordered. 2 positions are modified to phosphoserine: serine 25 and serine 31. Residues 37-86 (ANAHSSARARPAADPTGAPAAEAAQPQAQVAAHPEQTAPWTEKELQPSEK) form a disordered region. Low complexity predominate over residues 44 to 72 (RARPAADPTGAPAAEAAQPQAQVAAHPEQ). Tandem repeats lie at residues 109 to 141 (GVAS…VVSS), 142 to 174 (GVTG…TVST), 175 to 207 (GLTG…TVTT), 208 to 240 (GVMG…AVST), 241 to 273 (GLTG…TVCS), 274 to 306 (GVTG…TVCS), 307 to 339 (GVTG…TVCS), 340 to 372 (GVTG…TVCS), 373 to 405 (GVTG…TMST), 406 to 438 (GLTG…TVCS), 439 to 471 (GVTG…TVCS), 472 to 504 (GVTG…AVST), 505 to 537 (GLTG…TVCS), 538 to 570 (GVTS…TMST), 571 to 603 (GLTG…TVTT), 604 to 636 (GLVG…TIYS), 637 to 669 (GVTS…TFGS), 670 to 702 (GVTS…TVTT), 703 to 735 (GLMG…TVCS), 736 to 768 (GVTG…AVST), 769 to 801 (GLTG…AVCS), 802 to 834 (GVTG…TVCS), 835 to 867 (GVTG…TLGS), 868 to 900 (GVTG…AVST), 901 to 933 (GLTG…TVCS), 934 to 966 (GVTG…AVTT), and 967 to 999 (GVTG…TVFS). The 27 X 33 AA approximate tandem repeat stretch occupies residues 109 to 999 (GVASVVDVAK…LMGTKDTVFS (891 aa)). The segment covering 1060–1083 (PATSWGGLTSSRTTDNGGEQTALS) has biased composition (polar residues). 2 disordered regions span residues 1060 to 1093 (PATS…SGIS) and 1240 to 1260 (QAPE…EDAA).

This sequence belongs to the perilipin family.

The protein localises to the cell membrane. It is found in the cytoplasm. It localises to the lipid droplet. Its function is as follows. May play a role in triacylglycerol packaging into adipocytes. May function as a coat protein involved in the biogenesis of lipid droplets. This chain is Perilipin-4, found in Homo sapiens (Human).